A 93-amino-acid polypeptide reads, in one-letter code: Cell division protein FtsB (93 aa).

Topologically, residues 1-3 (MRI) are cytoplasmic. Residues 4 to 21 (FVIALTLLFGWLQYTLWF) form a helical membrane-spanning segment. The Periplasmic segment spans residues 22 to 93 (GKNGVSDYYT…FYRIVDEEEH (72 aa)). A coiled-coil region spans residues 31–75 (TVEDEIEVQQQVNSKLQARNNEMFAEIDDLRQGLDAIEERARHEL).

Belongs to the FtsB family. As to quaternary structure, part of a complex composed of FtsB, FtsL and FtsQ.

It is found in the cell inner membrane. Essential cell division protein. May link together the upstream cell division proteins, which are predominantly cytoplasmic, with the downstream cell division proteins, which are predominantly periplasmic. The polypeptide is Cell division protein FtsB (Vibrio campbellii (strain ATCC BAA-1116)).